A 701-amino-acid chain; its full sequence is SH3 domain-binding protein 1 (701 aa).

Residues 1 to 10 are compositionally biased toward basic residues; that stretch reads MMKRQLHRMR. 2 disordered regions span residues 1 to 23 and 160 to 182; these read MMKRQLHRMRQLAQTGSLGRTPE and SQATKNSGSSQGLGGSPGSHSHT. The tract at residues 1–275 is interaction with CGNL1; the sequence is MMKRQLHRMR…TATHFPRVYG (275 aa). The BAR domain occupies 17 to 262; that stretch reads SLGRTPETAE…RENHGQADHS (246 aa). 4 positions are modified to phosphoserine: serine 175, serine 241, serine 262, and serine 264. A Rho-GAP domain is found at 276 to 469; it reads VSLATHLQEL…ALIQSADTLF (194 aa). The interval 470–701 is interaction with CD2AP; the sequence is PGDINFNVSG…RPRSLASETN (232 aa). The tract at residues 496–701 is disordered; it reads SEELPSTAVP…RPRSLASETN (206 aa). Residues 508-522 show a composition bias toward pro residues; the sequence is ATTPAPAPAPAPAPA. Serine 544 and serine 550 each carry phosphoserine. 2 stretches are compositionally biased toward pro residues: residues 570–579 and 587–596; these read PARPTMPPPQ and PPAPPLPPGS. Phosphothreonine is present on threonine 601. The SH3-binding motif lies at 616 to 625; that stretch reads APTVPPPLPP. 2 stretches are compositionally biased toward pro residues: residues 618 to 630 and 641 to 652; these read TVPPPLPPTPPQP and SPSPASPGPASP. Residue threonine 626 is modified to Phosphothreonine. At serine 653 the chain carries Phosphoserine. Residues 666–677 show a composition bias toward low complexity; it reads GAATAEGGAPEA. Pro residues predominate over residues 682-692; that stretch reads PTPPAIPPQPR.

In terms of assembly, interacts with RAC1. Interacts with the exocyst via EXOC4 and EXOC8; required for the localization of both SH3BP1 and the exocyst to the leading edge of migrating cells. Interacts with CD2AP and CGNL1; probably part of a complex at cell junctions. Interacts with CAPZA1; recruits CAPZA1 to forming cell junctions. May interact with AFDN. Interacts with PLXND1; they dissociate upon SEMA3E binding to PLXND1 allowing SH3BP1 to transduce downstream signal through RAC1 inactivation. Interacts with ABL1, GRB2 and SRC (via SH3 domain).

It is found in the cell projection. The protein resides in the cell junction. Its subcellular location is the tight junction. It localises to the adherens junction. The protein localises to the phagocytic cup. It is found in the nucleus. The protein resides in the cytoplasm. Its subcellular location is the cytosol. Functionally, GTPase activating protein (GAP) which specifically converts GTP-bound Rho-type GTPases including RAC1 and CDC42 in their inactive GDP-bound form. By specifically inactivating RAC1 at the leading edge of migrating cells, it regulates the spatiotemporal organization of cell protrusions which is important for proper cell migration. Also negatively regulates CDC42 in the process of actin remodeling and the formation of epithelial cell junctions. Through its GAP activity toward RAC1 and/or CDC42 plays a specific role in phagocytosis of large particles. Specifically recruited by a PI3 kinase/PI3K-dependent mechanism to sites of large particles engagement, inactivates RAC1 and/or CDC42 allowing the reorganization of the underlying actin cytoskeleton required for engulfment. It also plays a role in angiogenesis and the process of repulsive guidance as part of a semaphorin-plexin signaling pathway. Following the binding of PLXND1 to extracellular SEMA3E it dissociates from PLXND1 and inactivates RAC1, inducing the intracellular reorganization of the actin cytoskeleton and the collapse of cells. The polypeptide is SH3 domain-binding protein 1 (Homo sapiens (Human)).